We begin with the raw amino-acid sequence, 366 residues long: uncharacterized protein (366 aa).

In terms of domain architecture, OBG-type G spans 64–289 (GTVGFIGFPS…LKETMWDYLN (226 aa)). GTP contacts are provided by residues 70-77 (GFPSVGKS), 116-120 (DLPGI), and 247-250 (NKID). The TGS domain maps to 289-365 (NLVRVYTRPR…LDEDVVTIVK (77 aa)).

The protein belongs to the TRAFAC class OBG-HflX-like GTPase superfamily. OBG GTPase family.

This is an uncharacterized protein from Schizosaccharomyces pombe (strain 972 / ATCC 24843) (Fission yeast).